Reading from the N-terminus, the 1317-residue chain is WASH complex subunit 2 (1317 aa).

The sufficient for interaction with WASHC3, WASHC4 and WASHC5; required for interaction with WASHC1 stretch occupies residues 1–219 (MNRTSPDSER…VGSDRGSIVD (219 aa)). Phosphoserine is present on residues serine 157, serine 159, serine 204, serine 205, and serine 209. Residues 201 to 213 (GELSSEEGSVGSD) show a composition bias toward low complexity. A disordered region spans residues 201–630 (GELSSEEGSV…RKSKGELWDS (430 aa)). 2 stretches are compositionally biased toward acidic residues: residues 219 to 232 (DSEEEKEEEESDED) and 250 to 274 (DEEEDDDGDLFADSEKEGDDIEDIE). Serine 284 carries the phosphoserine modification. 2 stretches are compositionally biased toward basic and acidic residues: residues 289 to 325 (LAARIKGDMSNQLKEEQIADGKPQKTMKEKKEKRTPP) and 366 to 376 (DLFRETSRDRP). Phosphothreonine is present on threonine 323. The tract at residues 348 to 582 (SRGGLFSGQG…QVSSQQPQSQ (235 aa)) is sufficient for interaction with CCDC93. The tract at residues 349–1317 (RGGLFSGQGL…DDPLNAFGSQ (969 aa)) is interaction with VPS35. An LFa 1 motif is present at residues 358–368 (LFDDEDESDLF). Residues 379–399 (APVSEESSSPKPGKKIPAGAV) show a composition bias toward low complexity. Serine 385 and serine 387 each carry phosphoserine. 2 consecutive short sequence motifs (LFa) follow at residues 433 to 445 (LFDDNDDDDDNFF) and 464 to 473 (IFDDEEGDLF). The segment covering 500–518 (TLPSSKNPKLVSETKTQKG) has biased composition (polar residues). Short sequence motifs (LFa) lie at residues 519–530 (LFSDEEDSEDLF) and 554–565 (LFGDEDEEDNLF). 2 positions are modified to phosphoserine: serine 521 and serine 526. Over residues 529–548 (LFSSQNSSKSKSASLLSSQL) the composition is skewed to low complexity. Over residues 569 to 582 (PAKKQVSSQQPQSQ) the composition is skewed to low complexity. A compositionally biased stretch (basic and acidic residues) spans 583-592 (EKPKPSEQPK). Residues 599–611 (LFSSDEEDQWNIT) carry the LFa 6 motif. 2 positions are modified to phosphoserine: serine 601 and serine 602. Residues 613–627 (SHTKLATDRKSKGEL) show a composition bias toward basic and acidic residues. Short sequence motifs (LFa) lie at residues 646 to 657 (LFEEDDDEADLF) and 673 to 685 (LFEDDDDSGSSLF). The disordered stretch occupies residues 667-817 (TQRTSLLFED…GRPKSTGVFQ (151 aa)). Serine 710 carries the post-translational modification Phosphoserine. The span at 717–744 (VPSRVKSVDVKVGNGKEADVAKVTEKEG) shows a compositional bias: basic and acidic residues. Residues serine 763 and serine 778 each carry the phosphoserine modification. The segment covering 788–810 (EDQSNTHVSKNDAEKGLKTDGRP) has biased composition (basic and acidic residues). 2 short sequence motifs (LFa) span residues 815–823 (VFQDEELLF) and 832–838 (DPDVDLF). Serine 853 carries the post-translational modification Phosphoserine. The short motif at 854-864 (LFGDDEDYDLF) is the LFa 11 element. Disordered regions lie at residues 867–926 (AKTQ…REPS) and 960–1079 (ELAF…AAPP). The span at 874-906 (PEKKGALKKDRPVSLKNEEAPESTEGSKEKSLW) shows a compositional bias: basic and acidic residues. Residues 912–1317 (QDSSGLTPFK…DDPLNAFGSQ (406 aa)) form an interaction with phospholipids region. The segment covering 1003 to 1021 (NKSRVKVRGKRRPQTRAAR) has biased composition (basic residues). The tract at residues 1004–1022 (KSRVKVRGKRRPQTRAARR) is required for interaction with F-actin-capping protein subunit alpha (CAPZA1 or CAPZA2 or CAPZA3). Phosphoserine is present on residues serine 1029, serine 1047, serine 1064, and serine 1092. The short motif at 1107–1114 (LFDSGDIF) is the LFa 12 element. Residues 1119-1141 (GSQSMEGTKVKAAETPAHLSGGS) form a disordered region. 6 consecutive short sequence motifs (LFa) follow at residues 1147-1161 (VFPALSEASSTDDLF), 1177-1185 (LLEDEDDLF), 1210-1216 (IFEDDIF), 1238-1246 (LFDDNIDIF), 1266-1275 (VFDDDTDDIF), and 1306-1314 (IFDDPLNAF). Phosphoserine occurs at positions 1152, 1155, and 1156. The segment at 1158–1183 (DDLFQTVKPRPAKKRNPFPLLEDEDD) is disordered. Residues 1277–1317 (SGLQAKKSKPKSQSAEATSELRSDHKVSNIFDDPLNAFGSQ) form a disordered region. A Phosphoserine modification is found at serine 1316.

The protein belongs to the FAM21 family. In terms of assembly, component of the WASH core complex also described as WASH regulatory complex SHRC composed of WASHC1, WASHC2, WASHC3, WASHC4 and WASHC5; in the complex interacts (via N-terminus) directly with WASHC1. The WASH core complex associates via WASHC2 with the F-actin-capping protein dimer (formed by CAPZA1, CAPZA2 or CAPZA3 and CAPZB) in a transient or substoichiometric manner which was initially described as WASH complex. Interacts with VPS35; mediates the association with the retromer CSC complex. Interacts with FKBP15. Interacts with CCDC93, CCDC22, C16orf62 homolog; indicative for an association of the WASH core complex with the CCC complex. Directly interacts with TBC1D23.

The protein resides in the early endosome membrane. Its subcellular location is the cell membrane. Functionally, acts as a component of the WASH core complex that functions as a nucleation-promoting factor (NPF) at the surface of endosomes, where it recruits and activates the Arp2/3 complex to induce actin polymerization, playing a key role in the fission of tubules that serve as transport intermediates during endosome sorting. Mediates the recruitment of the WASH core complex to endosome membranes via binding to phospholipids and VPS35 of the retromer CSC. Mediates the recruitment of the F-actin-capping protein dimer to the WASH core complex probably promoting localized F-actin polymerization needed for vesicle scission. Via its C-terminus binds various phospholipids, most strongly phosphatidylinositol 4-phosphate (PtdIns-(4)P), phosphatidylinositol 5-phosphate (PtdIns-(5)P) and phosphatidylinositol 3,5-bisphosphate (PtdIns-(3,5)P2). Involved in the endosome-to-plasma membrane trafficking and recycling of SNX27-retromer-dependent cargo proteins, such as GLUT1. Required for the association of DNAJC13, ENTR1, ANKRD50 with retromer CSC subunit VPS35. Required for the endosomal recruitment of CCC complex subunits COMMD1, CCDC93 and C16orf62 homolog. This chain is WASH complex subunit 2, found in Cricetulus griseus (Chinese hamster).